Reading from the N-terminus, the 146-residue chain is Sordarin/hypoxysordarin biosynthesis cluster protein G (146 aa).

It participates in antibiotic biosynthesis. Its function is as follows. Part of the gene cluster that mediates the biosynthesis of sordarin and hypoxysordarin, glycoside antibiotics with a unique tetracyclic diterpene aglycone structure. First, the geranylgeranyl diphosphate synthase sdnC constructs GGDP from farnesyl diphosphate and isopentenyl diphosphate. The diterpene cyclase sdnA then catalyzes the cyclization of GGDP to afford cycloaraneosene. Cycloaraneosene is then hydroxylated four times by the putative cytochrome P450 monooxygenases sdnB, sdnE, sdnF and sdnH to give a hydroxylated cycloaraneosene derivative such as cycloaraneosene-8,9,13,19-tetraol. Although the order of the hydroxylations is unclear, at least C8, C9 and C13 of the cycloaraneosene skeleton are hydroxylated before the sordaricin formation. Dehydration of the 13-hydroxy group of the hydroxylated cycloaraneosene derivative might be catalyzed by an unassigned hypothetical protein such as sdnG and sdnP to construct the cyclopentadiene moiety. The FAD-dependent oxidoreductase sdnN is proposed to catalyze the oxidation at C9 of the hydroxylated cycloaraneosene derivative and also catalyze the Baeyer-Villiger oxidation to give the lactone intermediate. The presumed lactone intermediate would be hydrolyzed to give an acrolein moiety and a carboxylate moiety. Then, [4+2]cycloaddition would occur between the acrolein moiety and the cyclopentadiene moiety to give sordaricin. SdnN might also be involved in the [4+2]cycloaddition after the hypothesized oxidation to accommodate the oxidized product and prompt the [4+2]cycloaddition. GDP-6-deoxy-D-altrose may be biosynthesized from GDP-D-mannose by the putative GDP-mannose-4,6-dehydratase sdnI and the short-chain dehydrogenase sdnK. The glycosyltransferase sdnJ catalyzes the attachment of 6-deoxy-D-altrose onto the 19-hydroxy group of sordaricin to give 4'-O-demethylsordarin. The methyltransferase sdnD would complete the biosynthesis of sordarin. Sordarin can be further modified into hypoxysordarin. The unique acyl chain at the 3'-hydroxy group of hypoxysordarin would be constructed by an iterative type I PKS sdnO and the trans-acting polyketide methyltransferase sdnL. SdnL would be responsible for the introduction of an alpha-methyl group of the polyketide chain. Alternatively, the beta-lactamase-like protein sdnR might be responsible for the cleavage and transfer of the polyketide chain from the PKS sdnO to sordarin. Two putative cytochrome P450 monooxygenases, sdnQ and sdnT, might catalyze the epoxidations of the polyketide chain to complete the biosynthesis of hypoxysordarin. Transcriptional regulators sdnM and sdnS are presumably encoded for the transcriptional regulation of the expression of the sdn gene cluster. This chain is Sordarin/hypoxysordarin biosynthesis cluster protein G, found in Sordaria araneosa (Pleurage araneosa).